A 117-amino-acid polypeptide reads, in one-letter code: Large ribosomal subunit protein bL19 (117 aa).

This sequence belongs to the bacterial ribosomal protein bL19 family.

This protein is located at the 30S-50S ribosomal subunit interface and may play a role in the structure and function of the aminoacyl-tRNA binding site. This is Large ribosomal subunit protein bL19 from Vesicomyosocius okutanii subsp. Calyptogena okutanii (strain HA).